The chain runs to 216 residues: SHKVSGGLHGVGVSVVNALSSKLQLTIHRAGQIHEQEYQHGDPQYPLKVVGETSTTGTTVRFWPSGDTFSQTIFNVDILARRLRELSFLNAGVKIVLRDERVNFEHIYAYEGGLSEKSALDIAGLPGKLADCQEKDPALSELYLVEGDSPGGSAKQGRNRKMQAILPLKGKILNVERARFDKMISSQEVGTLITALGCGIGREEYNPDKLRYHKII.

The Toprim domain occupies 140–216 (SELYLVEGDS…PDKLRYHKII (77 aa)).

It belongs to the type II topoisomerase GyrB family. As to quaternary structure, heterotetramer, composed of two GyrA and two GyrB chains. In the heterotetramer, GyrA contains the active site tyrosine that forms a transient covalent intermediate with DNA, while GyrB binds cofactors and catalyzes ATP hydrolysis.

It localises to the cytoplasm. It catalyses the reaction ATP-dependent breakage, passage and rejoining of double-stranded DNA.. In terms of biological role, a type II topoisomerase that negatively supercoils closed circular double-stranded (ds) DNA in an ATP-dependent manner to modulate DNA topology and maintain chromosomes in an underwound state. Negative supercoiling favors strand separation, and DNA replication, transcription, recombination and repair, all of which involve strand separation. Also able to catalyze the interconversion of other topological isomers of dsDNA rings, including catenanes and knotted rings. Type II topoisomerases break and join 2 DNA strands simultaneously in an ATP-dependent manner. This chain is DNA gyrase subunit B (gyrB), found in Acinetobacter sp. (strain ATCC 33308 / BD413 ErpE27).